The sequence spans 261 residues: Glutamate 5-kinase (261 aa).

Lys-7 contributes to the ATP binding site. Residues Ser-46, Asp-131, and Asn-147 each coordinate substrate. Residues 167–168 and 209–215 contribute to the ATP site; these read SD and TGGIVTK.

The protein belongs to the glutamate 5-kinase family.

Its subcellular location is the cytoplasm. The catalysed reaction is L-glutamate + ATP = L-glutamyl 5-phosphate + ADP. The protein operates within amino-acid biosynthesis; L-proline biosynthesis; L-glutamate 5-semialdehyde from L-glutamate: step 1/2. Its function is as follows. Catalyzes the transfer of a phosphate group to glutamate to form L-glutamate 5-phosphate. The polypeptide is Glutamate 5-kinase (Wolinella succinogenes (strain ATCC 29543 / DSM 1740 / CCUG 13145 / JCM 31913 / LMG 7466 / NCTC 11488 / FDC 602W) (Vibrio succinogenes)).